A 159-amino-acid chain; its full sequence is MSRISQIELDDRNLPPPTPEIEQERKVAIFDLIEENSFVLPKRDERDVPEGPYHLSLSIREKRLVFDVQTEGGDKAAEFHLSLSPFRQVVKDYYQICESYFTAVKTLPPSQIETIDMARRGIHNEGSRVLQERLEGKAEVDTDTARRLFTLICVLHFGG.

The tract at residues 1-21 (MSRISQIELDDRNLPPPTPEI) is disordered.

This sequence belongs to the UPF0262 family.

This Ruegeria sp. (strain TM1040) (Silicibacter sp.) protein is UPF0262 protein TM1040_3562.